Reading from the N-terminus, the 262-residue chain is Ninja-family protein 3 (262 aa).

A disordered region spans residues Arg48–Asn69.

Belongs to the Ninja family.

It is found in the nucleus. The sequence is that of Ninja-family protein 3 from Zea mays (Maize).